The chain runs to 625 residues: Glyco-Gag protein (625 aa).

Residues 1–66 (LGDVSEASGA…SVFRRNRAAR (66 aa)) lie on the Cytoplasmic side of the membrane. The chain crosses the membrane as a helical span at residues 67–86 (LVCLSIVLSFVCSLLFWTAS). Residues 87 to 625 (KNMGQTVTTP…PQTSLLTLDD (539 aa)) are Extracellular-facing. An N-linked (GlcNAc...) asparagine; by host glycan is attached at Asn-113. The interval 195 to 305 (PSPTAPILPS…STTSRAFPLR (111 aa)) is disordered. Residue Asn-479 is glycosylated (N-linked (GlcNAc...) asparagine; by host). Composition is skewed to basic and acidic residues over residues 522-553 (ETPE…EKER) and 573-606 (RQDR…DCPK). The tract at residues 522–625 (ETPEEREERV…PQTSLLTLDD (104 aa)) is disordered.

Post-translationally, glycosylated by host. Cleaved by host near the middle of the molecule, releasing the c-terminal half containing capsid and nucleoprotein domains op GAG.

The protein resides in the host cell membrane. Its function is as follows. Plays a role in viral particle release. Presumably acts by facilitating the fission of the virion bud at the cell surface. May prevent the antiviral activity of murine APOBEC3. The sequence is that of Glyco-Gag protein from AKV murine leukemia virus (AKR (endogenous) murine leukemia virus).